The sequence spans 309 residues: Homoserine O-succinyltransferase (309 aa).

Residue Cys142 is the Acyl-thioester intermediate of the active site. Residues Lys163 and Ser192 each coordinate substrate. The Proton acceptor role is filled by His235. Glu237 is an active-site residue. Arg249 lines the substrate pocket.

Belongs to the MetA family.

Its subcellular location is the cytoplasm. It carries out the reaction L-homoserine + succinyl-CoA = O-succinyl-L-homoserine + CoA. The protein operates within amino-acid biosynthesis; L-methionine biosynthesis via de novo pathway; O-succinyl-L-homoserine from L-homoserine: step 1/1. Its function is as follows. Transfers a succinyl group from succinyl-CoA to L-homoserine, forming succinyl-L-homoserine. The sequence is that of Homoserine O-succinyltransferase from Citrobacter koseri (strain ATCC BAA-895 / CDC 4225-83 / SGSC4696).